We begin with the raw amino-acid sequence, 286 residues long: Tyrosine recombinase Tlet_1492 (286 aa).

A Core-binding (CB) domain is found at 1–86 (MERILQNFSD…SLRSFFNYLQ (86 aa)). The region spanning 107-280 (RIPDFLLPSE…VDQEKFDAIN (174 aa)) is the Tyr recombinase domain. Active-site residues include Arg-143, Lys-168, His-232, Arg-235, and His-258. Tyr-267 acts as the O-(3'-phospho-DNA)-tyrosine intermediate in catalysis.

The protein belongs to the 'phage' integrase family.

It is found in the cytoplasm. Site-specific tyrosine recombinase, which acts by catalyzing the cutting and rejoining of the recombining DNA molecules. The chain is Tyrosine recombinase Tlet_1492 from Pseudothermotoga lettingae (strain ATCC BAA-301 / DSM 14385 / NBRC 107922 / TMO) (Thermotoga lettingae).